The chain runs to 527 residues: Phosphoenolpyruvate carboxykinase (ATP) (527 aa).

3 residues coordinate substrate: arginine 56, tyrosine 192, and lysine 198. Residues lysine 198, histidine 217, and 233–241 (GLSGTGKTT) contribute to the ATP site. Mn(2+) is bound by residues lysine 198 and histidine 217. Residue aspartate 254 coordinates Mn(2+). Residues glutamate 282, arginine 319, and threonine 444 each coordinate ATP. Residue arginine 319 coordinates substrate.

The protein belongs to the phosphoenolpyruvate carboxykinase (ATP) family. Mn(2+) is required as a cofactor.

The protein resides in the cytoplasm. The enzyme catalyses oxaloacetate + ATP = phosphoenolpyruvate + ADP + CO2. It functions in the pathway carbohydrate biosynthesis; gluconeogenesis. Functionally, involved in the gluconeogenesis. Catalyzes the conversion of oxaloacetate (OAA) to phosphoenolpyruvate (PEP) through direct phosphoryl transfer between the nucleoside triphosphate and OAA. This chain is Phosphoenolpyruvate carboxykinase (ATP), found in Bacillus subtilis (strain 168).